Consider the following 91-residue polypeptide: Small ribosomal subunit protein uS19 (91 aa).

Belongs to the universal ribosomal protein uS19 family.

Its function is as follows. Protein S19 forms a complex with S13 that binds strongly to the 16S ribosomal RNA. The polypeptide is Small ribosomal subunit protein uS19 (Shouchella clausii (strain KSM-K16) (Alkalihalobacillus clausii)).